Here is a 418-residue protein sequence, read N- to C-terminus: Flavin-dependent L-tryptophan oxidase VioA (418 aa).

Glycine 13 contributes to the Mg(2+) binding site. Residue serine 15 participates in FAD binding. Mg(2+) is bound at residue glycine 16. The FAD site is built by aspartate 38, arginine 46, and arginine 64. 2 residues coordinate substrate: arginine 64 and histidine 163. Leucine 208 lines the FAD pocket. Alanine 240 serves as a coordination point for Mg(2+). Tyrosine 309 is a substrate binding site. Methionine 398 lines the FAD pocket.

Belongs to the flavin monoamine oxidase family. In terms of assembly, homodimer. The cofactor is FAD. Mg(2+) is required as a cofactor.

It catalyses the reaction L-tryptophan + O2 = 2-iminio-3-(indol-3-yl)propanoate + H2O2. The catalysed reaction is 7-chloro-L-tryptophan + O2 = 3-(7-chloroindol-3-yl)-2-iminopropanoate + H2O2. Its pathway is pigment biosynthesis; violacein biosynthesis. The enzyme generates the imine form of indole 3-pyruvate (IPA) from L-tryptophan (L-Trp), with concomitant two-electron reduction of O(2) to H(2)O(2). The chain is Flavin-dependent L-tryptophan oxidase VioA (vioA) from Chromobacterium violaceum (strain ATCC 12472 / DSM 30191 / JCM 1249 / CCUG 213 / NBRC 12614 / NCIMB 9131 / NCTC 9757 / MK).